Here is a 457-residue protein sequence, read N- to C-terminus: Angiopoietin-related protein 6 (457 aa).

Residues 1–24 (MGTARLRKLQLLLLLGAWRALGGA) form the signal peptide. 2 coiled-coil regions span residues 51–77 (DSEL…RAAE) and 126–164 (LLAE…QHSS). The interval 201–235 (SNTSRRLDQTPEHQREQSLRQQGPPSSLLPTGHLA) is disordered. The N-linked (GlcNAc...) asparagine glycan is linked to asparagine 202. Positions 205 to 218 (RRLDQTPEHQREQS) are enriched in basic and acidic residues. Over residues 219-229 (LRQQGPPSSLL) the composition is skewed to polar residues. Residues 238 to 456 (TRPVGPWRDC…KAVMLTRLVR (219 aa)) enclose the Fibrinogen C-terminal domain. 2 disulfides stabilise this stretch: cysteine 247–cysteine 274 and cysteine 397–cysteine 410.

Highly expressed in the liver, specifically in hepatocytes, and weakly in the heart. Expressed in hematopoietic cells, platelets and mast cells, and detected at wounded skin.

The protein resides in the secreted. Its function is as follows. May play a role in the wound healing process. May promote epidermal proliferation, remodeling and regeneration. May promote the chemotactic activity of endothelial cells and induce neovascularization. May counteract high-fat diet-induced obesity and related insulin resistance through increased energy expenditure. This Mus musculus (Mouse) protein is Angiopoietin-related protein 6 (Angptl6).